Reading from the N-terminus, the 193-residue chain is Cysteine and glycine-rich protein 1 (193 aa).

In terms of domain architecture, LIM zinc-binding 1 spans 10 to 61 (CGVCQKTVYFAEEVQCEGNSFHKSCFLCMVCKKNLDSTTVAVHGEEIYCKSC). A Nuclear localization signal motif is present at residues 64–69 (KKYGPK). A Phosphoserine modification is found at S81. K84 carries the N6-acetyllysine modification. K91 is covalently cross-linked (Glycyl lysine isopeptide (Lys-Gly) (interchain with G-Cter in SUMO2)). Residues K112, K131, K137, and K161 each carry the N6-acetyllysine modification. The LIM zinc-binding 2 domain maps to 119–170 (CPRCSQAVYAAEKVIGAGKSWHKSCFRCAKCGKGLESTTLADKDGEIYCKGC). S192 carries the post-translational modification Phosphoserine.

Interacts with ASCC1; ASCC2 and TRIP4.

It is found in the nucleus. Functionally, could play a role in neuronal development. The protein is Cysteine and glycine-rich protein 1 (Csrp1) of Rattus norvegicus (Rat).